The primary structure comprises 254 residues: 3-dehydroquinate dehydratase (254 aa).

Residues 47–49 (EFR) and arginine 83 each bind 3-dehydroquinate. Residue histidine 144 is the Proton donor/acceptor of the active site. The active-site Schiff-base intermediate with substrate is lysine 171. Positions 213, 232, and 236 each coordinate 3-dehydroquinate.

Belongs to the type-I 3-dehydroquinase family. As to quaternary structure, homodimer.

The catalysed reaction is 3-dehydroquinate = 3-dehydroshikimate + H2O. Its pathway is metabolic intermediate biosynthesis; chorismate biosynthesis; chorismate from D-erythrose 4-phosphate and phosphoenolpyruvate: step 3/7. Functionally, involved in the third step of the chorismate pathway, which leads to the biosynthesis of aromatic amino acids. Catalyzes the cis-dehydration of 3-dehydroquinate (DHQ) and introduces the first double bond of the aromatic ring to yield 3-dehydroshikimate. The sequence is that of 3-dehydroquinate dehydratase from Neisseria meningitidis serogroup A / serotype 4A (strain DSM 15465 / Z2491).